Here is a 124-residue protein sequence, read N- to C-terminus: Orexigenic neuropeptide QRFP (124 aa).

An N-terminal signal peptide occupies residues 1–17 (MRCLCSWLCLLLPLSAC). A propeptide spanning residues 18 to 79 (FPLLDRRGPT…REHTGFRLGR (62 aa)) is cleaved from the precursor. Positions 63–100 (KEQQASRREHTGFRLGRQDSGSEATGFLPTDSEKASGP) are disordered. Position 80 is a pyrrolidone carboxylic acid (Q80). F122 carries the post-translational modification Phenylalanine amide.

It belongs to the RFamide neuropeptide family. In terms of assembly, ligand for the G-protein coupled receptor QRFPR/GPR103. In terms of tissue distribution, expressed in the brain with highest expression levels in the hypothalamus and optic nerve. Also expressed in the trachea and mammary gland.

The protein localises to the secreted. In terms of biological role, stimulates feeding and grooming behavior, metabolic rate and locomotor activity and increases blood pressure. May have orexigenic activity. May promote aldosterone secretion by the adrenal gland. In Rattus norvegicus (Rat), this protein is Orexigenic neuropeptide QRFP (Qrfp).